A 233-amino-acid chain; its full sequence is Ribosomal RNA large subunit methyltransferase E (233 aa).

Gly80, Trp82, Asp108, Asp124, and Asp148 together coordinate S-adenosyl-L-methionine. Lys188 serves as the catalytic Proton acceptor.

Belongs to the class I-like SAM-binding methyltransferase superfamily. RNA methyltransferase RlmE family.

Its subcellular location is the cytoplasm. The catalysed reaction is uridine(2552) in 23S rRNA + S-adenosyl-L-methionine = 2'-O-methyluridine(2552) in 23S rRNA + S-adenosyl-L-homocysteine + H(+). Specifically methylates the uridine in position 2552 of 23S rRNA at the 2'-O position of the ribose in the fully assembled 50S ribosomal subunit. The protein is Ribosomal RNA large subunit methyltransferase E of Ruegeria pomeroyi (strain ATCC 700808 / DSM 15171 / DSS-3) (Silicibacter pomeroyi).